The sequence spans 647 residues: Probable potassium transport system protein Kup (647 aa).

The next 13 membrane-spanning stretches (helical) occupy residues 32-52 (IALM…SPLY), 74-94 (VISM…VLFV), 124-144 (LLII…AIIT), 166-186 (FVLP…KTGT), 193-213 (FGPI…HQVI), 230-250 (FLIE…LVLT), 271-291 (WFFI…AMFL), 300-320 (PFFL…ATAA), 322-342 (VIAS…AILL), 361-381 (IYMP…VLAF), 390-410 (AYGI…AIVM), 418-438 (TILV…FLTA), and 443-463 (IMEG…FLMT).

This sequence belongs to the HAK/KUP transporter (TC 2.A.72) family.

Its subcellular location is the cell inner membrane. The enzyme catalyses K(+)(in) + H(+)(in) = K(+)(out) + H(+)(out). Transport of potassium into the cell. Likely operates as a K(+):H(+) symporter. The chain is Probable potassium transport system protein Kup from Polynucleobacter asymbioticus (strain DSM 18221 / CIP 109841 / QLW-P1DMWA-1) (Polynucleobacter necessarius subsp. asymbioticus).